The primary structure comprises 162 residues: SCF ubiquitin ligase complex protein SKP1b (162 aa).

Residue Ser2 is modified to N-acetylserine. An interaction with the F-box domain of F-box proteins region spans residues 100–162; that stretch reads ILAANYLDIK…NEWCEDKGGN (63 aa). 4-hydroxyproline is present on Pro143. Residue Pro143 is glycosylated (O-linked (GlcNAc...) hydroxyproline).

It belongs to the SKP1 family. In terms of assembly, multiprotein complex (SCF) with cullin and F-box-containing protein. Capable of undergoing aggregation. O-linked glycan consists of linear Gal-Gal-Fuc-Gal-GlcNAc. Post-translationally, not glycosylated in prespore cells. In terms of processing, fpaA and fpaB seem to be identically glycosylated. Glycosylation is required for nuclear enrichment. Hydroxylated by phyA.

The protein localises to the cytoplasm. The protein resides in the nucleus. This is SCF ubiquitin ligase complex protein SKP1b (fpaB-1) from Dictyostelium discoideum (Social amoeba).